A 176-amino-acid polypeptide reads, in one-letter code: DELTA-stichotoxin-She4a (176 aa).

Positions 2–11 (ELAGTIIDGA) are plays an important role in the hemolytic activity. The N-terminal region stretch occupies residues 10–29 (GASLTFEVLDKVLGELGKVS). Phosphocholine is bound by residues Ser53, Val86, Ser104, Pro106, Tyr132, Tyr136, and Tyr137. Residues 104 to 119 (SVPFDYNWYSNWWDVK) are trp-rich region, which is important for the binding to lipid membrane. Residues 142-144 (RGD) carry the Cell attachment site motif.

In terms of assembly, octamer or nonamer in membranes. Monomer in the soluble state.

It localises to the secreted. It is found in the nematocyst. The protein localises to the target cell membrane. Functionally, pore-forming protein that forms cations-selective hydrophilic pores of around 1 nm and causes cardiac stimulation and cytolysis. Pore formation is a multi-step process that involves specific recognition of membrane sphingomyelin (but neither cholesterol nor phosphatidylcholine) using aromatic rich region and adjacent phosphocholine (POC) binding site, firm binding to the membrane (mainly driven by hydrophobic interactions) accompanied by the transfer of the N-terminal region to the lipid-water interface and finally pore formation after oligomerization of monomers. Cytolytic effects include red blood cells hemolysis, platelet aggregation and lysis, cytotoxic and cytostatic effects on fibroblasts. Lethality in mammals has been ascribed to severe vasospasm of coronary vessels, cardiac arrhythmia, and inotropic effects. The chain is DELTA-stichotoxin-She4a from Stichodactyla helianthus (Sun anemone).